A 337-amino-acid chain; its full sequence is G-protein coupled receptor 26 (337 aa).

Over 1-10 (MNSWDAGLAG) the chain is Extracellular. Residues 11–31 (LLVGTMGVSLLSNALVLLCLL) traverse the membrane as a helical segment. The Cytoplasmic segment spans residues 32 to 47 (HSADIRRQAPALFTLN). Residues 48 to 68 (LTCGNLLCTVVNMPLTLAGVV) traverse the membrane as a helical segment. Topologically, residues 69–81 (AQRQPAGDRLCRL) are extracellular. Cys-79 and Cys-156 are oxidised to a cystine. A helical membrane pass occupies residues 82–102 (AAFLDTFLAANSMLSMAALSI). Residues 103-123 (DRWVAVVFPLSYRAKMRLRDA) are Cytoplasmic-facing. A helical membrane pass occupies residues 124–144 (ALMVAYTWLHALTFPAAALAL). Topologically, residues 145-168 (SWLGFHQLYASCTLCSRRPDERLR) are extracellular. Residues 169–189 (FAVFTGAFHALSFLLSFVVLC) form a helical membrane-spanning segment. The Cytoplasmic portion of the chain corresponds to 190–245 (CTYLKVLKVARFHCKRIDVITMQTLVLLVDLHPSVRERCLEEQKRRRQRATKKIST). Residues 246-266 (FIGTFLVCFAPYVITRLVELF) traverse the membrane as a helical segment. Topologically, residues 267–276 (STVPIGSHWG) are extracellular. A helical transmembrane segment spans residues 277–297 (VLSKCLAYSKAASDPFVYSLL). The Cytoplasmic portion of the chain corresponds to 298–337 (RHQYRKSCKEILNRLLHRRSIHSSGLTGDSHSQNILPVSE).

The protein belongs to the G-protein coupled receptor 1 family. In terms of tissue distribution, highly expressed in the CNS, the highest expression is seen in the amygdala, hippocampus and thalamus. Weak expression is detected in testis. Down-regulated in glioblastoma.

The protein localises to the cell membrane. Orphan receptor. Displays a significant level of constitutive activity. Its effect is mediated by G(s)-alpha protein that stimulate adenylate cyclase, resulting in an elevation of intracellular cAMP. The sequence is that of G-protein coupled receptor 26 (GPR26) from Homo sapiens (Human).